A 468-amino-acid chain; its full sequence is Probable Xaa-Pro aminopeptidase pepP (468 aa).

4 residues coordinate Mn(2+): Asp-265, Asp-276, Glu-399, and Glu-439.

Belongs to the peptidase M24B family. Mn(2+) is required as a cofactor.

The enzyme catalyses Release of any N-terminal amino acid, including proline, that is linked to proline, even from a dipeptide or tripeptide.. In terms of biological role, catalyzes the removal of a penultimate prolyl residue from the N-termini of peptides. The chain is Probable Xaa-Pro aminopeptidase pepP (pepP) from Aspergillus fumigatus (strain CBS 144.89 / FGSC A1163 / CEA10) (Neosartorya fumigata).